The sequence spans 32 residues: Giant hemoglobin AIV chain (32 aa).

This sequence belongs to the globin family. Giant hemoglobin is composed of four heme-containing chains (AI to AIV), and two linker chains (AV and AVI).

The protein is Giant hemoglobin AIV chain of Lamellibrachia sp. (Deep-sea giant tube worm).